The primary structure comprises 325 residues: Thiamine-monophosphate kinase (325 aa).

The Mg(2+) site is built by Asp-30, Ser-45, Thr-46, and Asp-47. His-54 serves as a coordination point for substrate. 2 residues coordinate Mg(2+): Asp-75 and Asp-122. ATP-binding positions include 121-122 (GD) and Arg-146. Residue Asp-212 participates in Mg(2+) binding. Position 214 (Ser-214) interacts with ATP. Residue Asp-215 coordinates Mg(2+). Glu-263 and Tyr-319 together coordinate substrate.

The protein belongs to the thiamine-monophosphate kinase family.

It catalyses the reaction thiamine phosphate + ATP = thiamine diphosphate + ADP. Its pathway is cofactor biosynthesis; thiamine diphosphate biosynthesis; thiamine diphosphate from thiamine phosphate: step 1/1. With respect to regulation, is markedly activated by the monovalent cations K(+), NH(4)(+), and Rb(+). Is significantly inhibited by ADP, AMP, p-chloromercuribenzoate, N-ethylmaleimide, pyrophosphate, and EDTA. Catalyzes the ATP-dependent phosphorylation of thiamine-monophosphate (TMP) to form thiamine-pyrophosphate (TPP), the active form of vitamin B1. Cannot use thiamine as substrate. Is highly specific for ATP as phosphate donor. This chain is Thiamine-monophosphate kinase (thiL), found in Escherichia coli (strain K12).